The following is a 287-amino-acid chain: Probable F-box protein At5g04010 (287 aa).

An F-box; degenerate domain is found at 50 to 101 (PSPPSWEILCLVGPYMDPESLAVASCVSTTWSKCFSSEDLWKSLPATRHSIF).

This is Probable F-box protein At5g04010 (NSFBx) from Arabidopsis thaliana (Mouse-ear cress).